Here is a 435-residue protein sequence, read N- to C-terminus: Estrogen-related receptor gamma (435 aa).

The disordered stretch occupies residues 1–64; it reads MSNKDRHIDS…GLDSPPLYPS (64 aa). Over residues 10–29 the composition is skewed to polar residues; it reads SSCSSFIKTEPSSPASLTDS. The span at 34-47 shows a compositional bias: low complexity; sequence SPGGSSDASGSYSS. Positions 102-177 form a DNA-binding region, nuclear receptor; the sequence is KRLCLVCGDI…VGMLKEGVRL (76 aa). 2 NR C4-type zinc fingers span residues 105-125 and 141-160; these read CLVC…CEAC and CPAT…CQAC. In terms of domain architecture, NR LBD spans 210-434; that stretch reads PYNKIVSHLL…KLFSEMLEAK (225 aa).

The protein belongs to the nuclear hormone receptor family. NR3 subfamily. Homodimer. Interacts with NRIP1, NCOA1 and NCOR2. Binds TLE1, PNRC1 and PNRC2. Binds GRIP1. In terms of processing, acetylated by PCAF/KAT2 (in vitro).

Its subcellular location is the nucleus. In terms of biological role, orphan receptor that acts as a transcription activator in the absence of bound ligand. Binds specifically to an estrogen response element and activates reporter genes controlled by estrogen response elements. Induces the expression of PERM1 in the skeletal muscle. This is Estrogen-related receptor gamma (ESRRG) from Pongo abelii (Sumatran orangutan).